The sequence spans 371 residues: Alanine racemase (371 aa).

Lys-40 acts as the Proton acceptor; specific for D-alanine in catalysis. Lys-40 carries the N6-(pyridoxal phosphate)lysine modification. Arg-138 contributes to the substrate binding site. The active-site Proton acceptor; specific for L-alanine is the Tyr-267. Substrate is bound at residue Met-314.

The protein belongs to the alanine racemase family. Requires pyridoxal 5'-phosphate as cofactor.

The enzyme catalyses L-alanine = D-alanine. It functions in the pathway amino-acid biosynthesis; D-alanine biosynthesis; D-alanine from L-alanine: step 1/1. Functionally, catalyzes the interconversion of L-alanine and D-alanine. May also act on other amino acids. The sequence is that of Alanine racemase (alr) from Ligilactobacillus salivarius (strain UCC118) (Lactobacillus salivarius).